We begin with the raw amino-acid sequence, 466 residues long: MVSSRASRRKRASATDIYKTCKQSGTCPPDVVNKVEGTTLADRFLQWASLGIFLGGLGIGTGTGTGGRTGYIPLGGRPSTVVDVTPARPPVVIEPVGPTEPSIVQLVEESSVVSSGTPIPTFTGTSGFEITSSATTTPAVLDITPASGSVQISTTSYTNPAFADPSLIEVPQTGEVSGNIFVTTPTSGTHGYEEIPMQVFASHGTGTEPISSTPVPGVSRVAGPRLYSRAYHQVRVNNFDFVTRPSSFVTFDNPAFEPGDTSLTFEPADTAPDPDFLDIVRLHRPALTSRRGTVRFSRLGKKATMFTRRGTQIGAQVHYYHDISNITATEDIEMQPLLTSESTDGLYDIYADADIDNAMLHTTSHTGSTGPRSHLSFPSIPSTVSTKYSNTTIPFTTSWDIPVTTGPDIVLPTASPNLPFVPPTSIDTTVAIAIQGSNYYLLPLLYYFLKKRKRIPYFFTDGFVAV.

Positions 1 to 12 (MVSSRASRRKRA) match the Nuclear localization signal motif. The cysteines at positions 21 and 27 are disulfide-linked. Residues 447–455 (YFLKKRKRI) carry the Nuclear localization signal motif.

The protein belongs to the papillomaviridae L2 protein family. As to quaternary structure, interacts with major capsid protein L1. Interacts with E2; this interaction inhibits E2 transcriptional activity but not the DNA replication function E2. Interacts with host GADD45GIP1. Interacts with host HSPA8; this interaction is required for L2 nuclear translocation. Interacts with host importins KPNB2 and KPNB3. Forms a complex with importin alpha2-beta1 heterodimers via interaction with the importin alpha2 adapter. Interacts with host DYNLT1; this interaction is essential for virus intracellular transport during entry. Interacts (via C-terminus) with host retromer subunits VPS35 and VPS29. Post-translationally, highly phosphorylated.

It is found in the virion. It localises to the host nucleus. The protein localises to the host early endosome. The protein resides in the host Golgi apparatus. In terms of biological role, minor protein of the capsid that localizes along the inner surface of the virion, within the central cavities beneath the L1 pentamers. Plays a role in capsid stabilization through interaction with the major capsid protein L1. Once the virion enters the host cell, L2 escorts the genomic DNA into the nucleus by promoting escape from the endosomal compartments and traffic through the host Golgi network. Mechanistically, the C-terminus of L2 possesses a cell-penetrating peptide that protudes from the host endosome, interacts with host cytoplasmic retromer cargo and thereby mediates the capsid delivery to the host trans-Golgi network. Plays a role through its interaction with host dynein in the intracellular microtubule-dependent transport of viral capsid toward the nucleus. Mediates the viral genome import into the nucleus through binding to host importins. Once within the nucleus, L2 localizes viral genomes to host PML bodies in order to activate early gene expression for establishment of infection. Later on, promotes late gene expression by interacting with the viral E2 protein and by inhibiting its transcriptional activation functions. During virion assembly, encapsidates the genome by direct interaction with the viral DNA. This Homo sapiens (Human) protein is Minor capsid protein L2.